Consider the following 465-residue polypeptide: MTQRVRTRFAPSPTGFIHLGNIRSALYPWAFARKMKGDFILRIEDTDVERSTQEAVDVILEAMDWLGLDIDEGPFYQMQRMDRYREVIAQMVAQDLAYPCYMSTEELDALREAQRVRGEKPRYDGTWRPEPGKVLPTPPAGVQPVIRFKNPIGGSVVWDDAVKGRIEISNDELDDLVIARPDGTPTYNFCVVVDDMDMRITHVIRGDDHVNNTPRQINILRALGGTPPIYAHLPTVLNEQGEKMSKRHGAMSVTGYRDAGYLPEAVVNYLARLGWAHGDAEIFSREQFVEWFDLEHLGKSPAQYNPEKLAWLNNHYIKQADNARLAELVKPFIEALGGRVEGGPQLADVMALVKDRANTLQEVAQTALLFYRTEISVAPELAAQHLTDEVRPGIMALADKLGTLPEWKREAIGAAFKEVLGAHGWKMPKLAMPVRLLVAGQLQTPSIDAVLELFGREVVLRRLAG.

Positions 11–21 (PSPTGFIHLGN) match the 'HIGH' region motif. Basic and acidic residues predominate over residues 120 to 131 (KPRYDGTWRPEP). The interval 120–139 (KPRYDGTWRPEPGKVLPTPP) is disordered. Residues 243–247 (KMSKR) carry the 'KMSKS' region motif. Lysine 246 contacts ATP.

This sequence belongs to the class-I aminoacyl-tRNA synthetase family. Glutamate--tRNA ligase type 1 subfamily. In terms of assembly, monomer.

It localises to the cytoplasm. It catalyses the reaction tRNA(Glu) + L-glutamate + ATP = L-glutamyl-tRNA(Glu) + AMP + diphosphate. Its function is as follows. Catalyzes the attachment of glutamate to tRNA(Glu) in a two-step reaction: glutamate is first activated by ATP to form Glu-AMP and then transferred to the acceptor end of tRNA(Glu). In Ralstonia nicotianae (strain ATCC BAA-1114 / GMI1000) (Ralstonia solanacearum), this protein is Glutamate--tRNA ligase.